A 784-amino-acid polypeptide reads, in one-letter code: MPRALWTAWVWAVIILSTEGASDQASSLSCDPTGVCDGHSRSLNSIPSGLTAGVKSLDLSNNEITYVSNRDLQRCVNLKTLRLGANEIHTVEEDSFFHLRNLEYLDLSYNRLSNLSSSWFRSLYVLKFLNLLGNLYKTLGETSLFSHLPNLRTLKVGNSNSFTEIHEKDFTGLTFLEELEISAQNLQIYVPKSLKSIQNISHLILHLKQPVLLVDILVDIVSSLDCLELRDTNLHTFHFSEASISEMSTSVKKLIFRNVQFTDESFVEVVKLFNYVSGILEVEFDDCTHDGIGDFRALSLDRIRHLGNVETLTIRKLHIPQFFLFQDLSSIYPLTGKVKRVTIENSKVFLVPCLLSQHLKSLEYLDLSENLMSEETLKNSACKDAWPFLQTLVLRQNRLKSLEKXGELLLTLENLNSLDISKNNFLSMPETCQWPGKMKQLNLSSTRIHSLTQCLPQTLEILDVSNNNLDSFSLILPQLKELYISRNKLKTLPDASFLPVLXVMRISRNIINTFSKEQLDSFQQLKTLEAGGNNFICSCDFLSFTQGQQALGRVLVDWPDDYHCDSPSHVRGQRVQDARLSLSECHRAAVVSAACCALFLLLLLMGVLCHRFHGLWYMKMMWAWLQAKRKPRKAPRRDICYDAFVSYSERDSYWVENLMVQELEQFNPPFKLCLHKRDFIPGKWIIDNIIDSIEKSHKTIFVLSENFVKSEWCKYELDFSHFRLFDENNDAAILILLEPIDKKAIPQRFCKLRKIMNTKTYLEWPVDETQQEGFWLNLRAAIRS.

Residues 1–20 (MPRALWTAWVWAVIILSTEG) form the signal peptide. Residues 21–587 (ASDQASSLSC…ARLSLSECHR (567 aa)) lie on the Extracellular side of the membrane. Cys30 and Cys36 form a disulfide bridge. LRR repeat units lie at residues 54–77 (VKSL…RCVN), 78–101 (LKTL…HLRN), 102–125 (LEYL…SLYV), 126–150 (LKFL…HLPN), 151–175 (LRTL…GLTF), 176–199 (LEEL…SIQN), 200–223 (ISHL…IVSS), 224–250 (LDCL…MSTS), 251–278 (VKKL…YVSG), 279–308 (ILEV…HLGN), 309–337 (VETL…LTGK), 338–361 (VKRV…HLKS), 362–388 (LEYL…AWPF), 389–414 (LQTL…TLEN), 415–437 (LNSL…WPGK), 438–457 (MKQL…CLPQ), 458–478 (TLEI…ILPQ), 479–500 (LKEL…FLPV), and 501–524 (LXVM…SFQQ). An N-linked (GlcNAc...) asparagine glycan is attached at Asn114. A glycan (N-linked (GlcNAc...) asparagine) is linked at Asn199. A disulfide bridge links Cys353 with Cys382. The cysteines at positions 432 and 454 are disulfide-linked. An N-linked (GlcNAc...) asparagine glycan is attached at Asn442. An LRRCT domain is found at 525 to 579 (LKTLEAGGNNFICSCDFLSFTQGQQALGRVLVDWPDDYHCDSPSHVRGQRVQDAR). Residues 588 to 608 (AAVVSAACCALFLLLLLMGVL) form a helical membrane-spanning segment. Over 609–784 (CHRFHGLWYM…WLNLRAAIRS (176 aa)) the chain is Cytoplasmic. The region spanning 639 to 782 (ICYDAFVSYS…GFWLNLRAAI (144 aa)) is the TIR domain. A Glycyl lysine isopeptide (Lys-Gly) (interchain with G-Cter in ubiquitin) cross-link involves residue Lys754. Residues 761-778 (YLEWPVDETQQEGFWLNL) carry the ATG16L1-binding motif motif.

The protein belongs to the Toll-like receptor family. Interacts with LY96, TLR1 and TLR6 (via extracellular domain). TLR2 seems to exist in heterodimers with either TLR1 or TLR6 before stimulation by the ligand. The heterodimers form bigger oligomers in response to their corresponding ligands as well as further heterotypic associations with other receptors such as CD14 and/or CD36. Binds MYD88 (via TIR domain). Interacts with TICAM1. Interacts with CNPY3. Interacts with ATG16L1. Interacts with PPP1R11. Interacts with TICAM2. Interacts with TIRAP. Post-translationally, ubiquitinated at Lys-754 by PPP1R11, leading to its degradation. Deubiquitinated by USP2. Glycosylation of Asn-442 is critical for secretion of the N-terminal ectodomain of TLR2.

The protein localises to the membrane. It is found in the cytoplasmic vesicle. Its subcellular location is the phagosome membrane. It localises to the membrane raft. Functionally, cooperates with LY96 to mediate the innate immune response to bacterial lipoproteins and other microbial cell wall components. Cooperates with TLR1 or TLR6 to mediate the innate immune response to bacterial lipoproteins or lipopeptides. Acts via MYD88 and TRAF6, leading to NF-kappa-B activation, cytokine secretion and the inflammatory response. May also promote apoptosis in response to lipoproteins. Forms activation clusters composed of several receptors depending on the ligand, these clusters trigger signaling from the cell surface and subsequently are targeted to the Golgi in a lipid-raft dependent pathway. Forms the cluster TLR2:TLR6:CD14:CD36 in response to diacylated lipopeptides and TLR2:TLR1:CD14 in response to triacylated lipopeptides. The sequence is that of Toll-like receptor 2 (TLR2) from Bos indicus (Zebu).